Reading from the N-terminus, the 327-residue chain is GMP reductase (327 aa).

Cys-175 (thioimidate intermediate) is an active-site residue. 204 to 227 (IIADGGIRTHGDIAKSIRFGASMV) contributes to the NADP(+) binding site.

Belongs to the IMPDH/GMPR family. GuaC type 2 subfamily.

It carries out the reaction IMP + NH4(+) + NADP(+) = GMP + NADPH + 2 H(+). Its function is as follows. Catalyzes the irreversible NADPH-dependent deamination of GMP to IMP. It functions in the conversion of nucleobase, nucleoside and nucleotide derivatives of G to A nucleotides, and in maintaining the intracellular balance of A and G nucleotides. The polypeptide is GMP reductase (Exiguobacterium sp. (strain ATCC BAA-1283 / AT1b)).